The primary structure comprises 436 residues: GTPase Der (436 aa).

EngA-type G domains follow at residues 4–167 and 176–351; these read PVVA…KDEE and IKLS…ENHK. GTP is bound by residues 10-17, 57-61, 119-122, 182-189, 229-233, and 294-297; these read GRPNVGKS, DTGGI, NKVD, DTAGM, and NKWD. The 85-residue stretch at 352–436 folds into the KH-like domain; the sequence is KRVQSSTLNE…PIRIIPRKRN (85 aa).

Belongs to the TRAFAC class TrmE-Era-EngA-EngB-Septin-like GTPase superfamily. EngA (Der) GTPase family. Associates with the 50S ribosomal subunit.

Functionally, GTPase that plays an essential role in the late steps of ribosome biogenesis. The sequence is that of GTPase Der from Staphylococcus carnosus (strain TM300).